Reading from the N-terminus, the 263-residue chain is 3-deoxy-manno-octulosonate cytidylyltransferase (263 aa).

It belongs to the KdsB family.

Its subcellular location is the cytoplasm. The enzyme catalyses 3-deoxy-alpha-D-manno-oct-2-ulosonate + CTP = CMP-3-deoxy-beta-D-manno-octulosonate + diphosphate. Its pathway is nucleotide-sugar biosynthesis; CMP-3-deoxy-D-manno-octulosonate biosynthesis; CMP-3-deoxy-D-manno-octulosonate from 3-deoxy-D-manno-octulosonate and CTP: step 1/1. The protein operates within bacterial outer membrane biogenesis; lipopolysaccharide biosynthesis. Its function is as follows. Activates KDO (a required 8-carbon sugar) for incorporation into bacterial lipopolysaccharide in Gram-negative bacteria. The sequence is that of 3-deoxy-manno-octulosonate cytidylyltransferase from Burkholderia multivorans (strain ATCC 17616 / 249).